Reading from the N-terminus, the 89-residue chain is Small ribosomal subunit protein uS15 (89 aa).

The span at 1 to 10 shows a compositional bias: basic and acidic residues; the sequence is MPLNTEKKQE. The segment at 1 to 22 is disordered; that stretch reads MPLNTEKKQELINSHQTHATDT. A compositionally biased stretch (polar residues) spans 11 to 22; it reads LINSHQTHATDT.

It belongs to the universal ribosomal protein uS15 family. As to quaternary structure, part of the 30S ribosomal subunit. Forms a bridge to the 50S subunit in the 70S ribosome, contacting the 23S rRNA.

Functionally, one of the primary rRNA binding proteins, it binds directly to 16S rRNA where it helps nucleate assembly of the platform of the 30S subunit by binding and bridging several RNA helices of the 16S rRNA. In terms of biological role, forms an intersubunit bridge (bridge B4) with the 23S rRNA of the 50S subunit in the ribosome. This Synechococcus sp. (strain RCC307) protein is Small ribosomal subunit protein uS15.